Reading from the N-terminus, the 587-residue chain is A-type ATP synthase subunit A (587 aa).

Glycine 234–threonine 241 contacts ATP.

It belongs to the ATPase alpha/beta chains family. In terms of assembly, the N-terminus (approximately residues 106-122) interacts with subunit H. Has multiple subunits with at least A(3), B(3), C, D, E(1 or 2), F, H(2), I and proteolipid K(x).

Its subcellular location is the cell membrane. It catalyses the reaction ATP + H2O + 4 H(+)(in) = ADP + phosphate + 5 H(+)(out). ATP hydrolysis is inhibited by N',N'-dicyclohexylcarbodiimide. Its function is as follows. Component of the A-type ATP synthase that produces ATP from ADP in the presence of a proton gradient across the membrane. The A chain is the catalytic subunit. Hydrolyzes ATP, GTP (86% of ATPase rate) and UTP (54% of ATPase rate), has very poor activity on CTP. In Methanocaldococcus jannaschii (strain ATCC 43067 / DSM 2661 / JAL-1 / JCM 10045 / NBRC 100440) (Methanococcus jannaschii), this protein is A-type ATP synthase subunit A.